We begin with the raw amino-acid sequence, 229 residues long: Phosphoglycolate phosphatase (229 aa).

Catalysis depends on Asp-18, which acts as the Nucleophile. Mg(2+)-binding residues include Asp-18, Asp-20, and Asp-176.

It belongs to the HAD-like hydrolase superfamily. CbbY/CbbZ/Gph/YieH family. Mg(2+) is required as a cofactor.

It catalyses the reaction 2-phosphoglycolate + H2O = glycolate + phosphate. The protein operates within organic acid metabolism; glycolate biosynthesis; glycolate from 2-phosphoglycolate: step 1/1. Functionally, specifically catalyzes the dephosphorylation of 2-phosphoglycolate. Is involved in the dissimilation of the intracellular 2-phosphoglycolate formed during the DNA repair of 3'-phosphoglycolate ends, a major class of DNA lesions induced by oxidative stress. This is Phosphoglycolate phosphatase from Xylella fastidiosa (strain 9a5c).